The following is a 287-amino-acid chain: ATP synthase gamma chain (287 aa).

Belongs to the ATPase gamma chain family. As to quaternary structure, F-type ATPases have 2 components, CF(1) - the catalytic core - and CF(0) - the membrane proton channel. CF(1) has five subunits: alpha(3), beta(3), gamma(1), delta(1), epsilon(1). CF(0) has three main subunits: a, b and c.

The protein localises to the cell inner membrane. Its function is as follows. Produces ATP from ADP in the presence of a proton gradient across the membrane. The gamma chain is believed to be important in regulating ATPase activity and the flow of protons through the CF(0) complex. The protein is ATP synthase gamma chain of Xanthomonas campestris pv. campestris (strain B100).